The following is an 82-amino-acid chain: Mu-conotoxin GVIIJ (82 aa).

An N-terminal signal peptide occupies residues 1-22 (MKLTCVVIVAALLLTACQLITA). Positions 23–47 (LDCGGTQKHRALRSTIKLSLLRQHR) are excised as a propeptide. At Trp49 the chain carries 6'-bromotryptophan. Cystine bridges form between Cys50/Cys65, Cys57/Cys69, and Cys64/Cys76. Pro53 carries the post-translational modification 4-hydroxyproline. Cys71 contacts a protein.

It belongs to the conotoxin O1 superfamily. Post-translationally, cys-71 is a key residue that tethers to the channel by covalent attachment, leading to nearly irreversible inhibition (k(off) very low). In order to determine the solution structure without dimerization, this residue was mutated to Cys. As to expression, expressed by the venom duct.

It localises to the secreted. Mu-conotoxins block voltage-gated sodium channels (Nav). This toxin (GVIIJ(SSG)) blocks Nav1.1/SCN1A (Kd=11 nM), Nav1.2/SCN2A (Kd=11 nM), Nav1.3/SCN3A (Kd=15 nM), Nav1.4/SCN4A (Kd=4.7 nM), Nav1.6/SCN8A (Kd=360 nM) and Nav1.7/SCN9A (Kd=41 nM). It binds the channel at the newly described site 8, which is composed by two surfaces whose one contains a non-disulfide-bonded cysteine (which is free to covalently bind the toxin Cys-71). It is noteworthy that coexpression of subunits beta-2 or beta-4 (but not beta-1 or beta-3) protects rNav1.1-1.7 against block by the toxin, since these subunits (thanks to their extracellular domain) covalently bind to the key cysteine of the channel, thus preventing the covalent binding of the toxin. This Conus geographus (Geography cone) protein is Mu-conotoxin GVIIJ.